We begin with the raw amino-acid sequence, 327 residues long: Phosphate acyltransferase (327 aa).

This sequence belongs to the PlsX family. Homodimer. Probably interacts with PlsY.

It is found in the cytoplasm. It catalyses the reaction a fatty acyl-[ACP] + phosphate = an acyl phosphate + holo-[ACP]. It participates in lipid metabolism; phospholipid metabolism. Its function is as follows. Catalyzes the reversible formation of acyl-phosphate (acyl-PO(4)) from acyl-[acyl-carrier-protein] (acyl-ACP). This enzyme utilizes acyl-ACP as fatty acyl donor, but not acyl-CoA. This Mycoplasma mobile (strain ATCC 43663 / 163K / NCTC 11711) (Mesomycoplasma mobile) protein is Phosphate acyltransferase.